The chain runs to 283 residues: MELWYTEEHTDKVRFSIKVDEQLYSGKSDFQRIDVFKSQEFGTFFTLDGLMMVTEKDEFIYHDMIVHVPMATNPNIKNVLVIGAGDGGTVRELTRYETIEKIDMVEIDKLVVDVCREYLPQTANKLDDPRVSLFFEDGLKFVRSVENKYDLIIVDSTDPFGPGEGLFTREFYGNCFKALKEDGILVNQHESPYYEEYARGMKRAHKRIKECFPVCRVYQAHIPTYPSGHWLFGFASKKYDPLNANIEKWNDLGLKTKYYNTDLHKGCFALPNYVKEMLENVDE.

In terms of domain architecture, PABS spans 2–237; sequence ELWYTEEHTD…GHWLFGFASK (236 aa). An S-methyl-5'-thioadenosine-binding site is contributed by Q31. Residues H62 and D86 each coordinate spermidine. S-methyl-5'-thioadenosine is bound by residues E106 and 137 to 138; that span reads DG. The active-site Proton acceptor is D155. 155 to 158 provides a ligand contact to spermidine; it reads DSTD. P162 is a binding site for S-methyl-5'-thioadenosine.

This sequence belongs to the spermidine/spermine synthase family. Homodimer or homotetramer.

It is found in the cytoplasm. The enzyme catalyses S-adenosyl 3-(methylsulfanyl)propylamine + putrescine = S-methyl-5'-thioadenosine + spermidine + H(+). It participates in amine and polyamine biosynthesis; spermidine biosynthesis; spermidine from putrescine: step 1/1. Catalyzes the irreversible transfer of a propylamine group from the amino donor S-adenosylmethioninamine (decarboxy-AdoMet) to putrescine (1,4-diaminobutane) to yield spermidine. This is Polyamine aminopropyltransferase from Clostridium perfringens (strain SM101 / Type A).